A 195-amino-acid chain; its full sequence is 7-methyl-GTP pyrophosphatase (195 aa).

The Proton acceptor role is filled by D71.

The protein belongs to the Maf family. YceF subfamily. A divalent metal cation serves as cofactor.

The protein resides in the cytoplasm. It carries out the reaction N(7)-methyl-GTP + H2O = N(7)-methyl-GMP + diphosphate + H(+). Functionally, nucleoside triphosphate pyrophosphatase that hydrolyzes 7-methyl-GTP (m(7)GTP). May have a dual role in cell division arrest and in preventing the incorporation of modified nucleotides into cellular nucleic acids. The sequence is that of 7-methyl-GTP pyrophosphatase from Shewanella oneidensis (strain ATCC 700550 / JCM 31522 / CIP 106686 / LMG 19005 / NCIMB 14063 / MR-1).